A 321-amino-acid chain; its full sequence is Ubiquitin carboxyl-terminal hydrolase ubh-4 (321 aa).

The region spanning 6–220 (SWCLIESDPG…ITFNLMALVP (215 aa)) is the UCH catalytic domain. Catalysis depends on cysteine 83, which acts as the Nucleophile. The active-site Proton donor is histidine 158. The ULD domain maps to 273-301 (NYTPFVIELMKILAKEGKLVGLVDNAYQA).

It belongs to the peptidase C12 family. Interacts with proteasome 19S subunit rpn-13. As to expression, highly expressed in intestine and to a lesser extent in other tissues including muscles and neurons.

It catalyses the reaction Thiol-dependent hydrolysis of ester, thioester, amide, peptide and isopeptide bonds formed by the C-terminal Gly of ubiquitin (a 76-residue protein attached to proteins as an intracellular targeting signal).. Ubiquitin-protein hydrolase involved both in the processing of ubiquitin precursors and of ubiquitinated proteins. This enzyme is a thiol protease that recognizes and hydrolyzes a peptide bond at the C-terminal glycine of ubiquitin. This is Ubiquitin carboxyl-terminal hydrolase ubh-4 from Caenorhabditis elegans.